Here is a 506-residue protein sequence, read N- to C-terminus: Ent-kaurenoic acid oxidase (506 aa).

A helical membrane pass occupies residues 11-31 (AWAAGDLWVLAAAVVAGVVLV). Cys451 contacts heme.

This sequence belongs to the cytochrome P450 family. Heme serves as cofactor. In terms of tissue distribution, expressed in roots and panicles. Expressed at low levels in vegetative shoot apices, leaf sheaths, leaf blades and stems.

The protein localises to the endoplasmic reticulum membrane. It catalyses the reaction ent-kaur-16-en-19-oate + 3 reduced [NADPH--hemoprotein reductase] + 3 O2 = gibberellin A12 + 3 oxidized [NADPH--hemoprotein reductase] + 4 H2O + 4 H(+). The catalysed reaction is ent-kaur-16-en-19-oate + reduced [NADPH--hemoprotein reductase] + O2 = ent-7alpha-hydroxykaur-16-en-19-oate + oxidized [NADPH--hemoprotein reductase] + H2O + H(+). It carries out the reaction ent-7alpha-hydroxykaur-16-en-19-oate + reduced [NADPH--hemoprotein reductase] + O2 = gibberellin A12 aldehyde + oxidized [NADPH--hemoprotein reductase] + 2 H2O + H(+). The enzyme catalyses gibberellin A12 aldehyde + reduced [NADPH--hemoprotein reductase] + O2 = gibberellin A12 + oxidized [NADPH--hemoprotein reductase] + H2O + 2 H(+). It functions in the pathway plant hormone biosynthesis; gibberellin biosynthesis. Functionally, involved in gibberellin (GA) biosynthesis. Catalyzes three successive oxidations of ent-kaurenoic acid giving gibberellin 12 (GA12), a key step in GAs biosynthesis. GAs, which are involved many processes, including stem elongation, play a central role in plant development. Required for pollen germination and elongation. The protein is Ent-kaurenoic acid oxidase of Oryza sativa subsp. japonica (Rice).